The primary structure comprises 514 residues: Triacylglyceride transporter MAB_2807 (514 aa).

A run of 11 helical transmembrane segments spans residues Ile19 to Val39, Gln58 to Gly78, Leu88 to Thr108, Val118 to Leu138, Leu157 to Thr177, Ala178 to Val198, Val210 to Tyr230, Leu239 to Leu259, Pro278 to Val298, Val316 to Leu336, and Ile344 to Pro364. Positions Val371–Pro380 are beta-hairpin. 3 helical membrane-spanning segments follow: residues Asp385–Leu405, Val420–Ile440, and Met485–Ser505.

Belongs to the major facilitator superfamily. P55 (TC 2.A.1.3.34) family.

It localises to the cell inner membrane. Its function is as follows. In association with lipoprotein LprG probably transports triacyglycerides (TAG) across the inner cell membrane into the periplasm; TAG probably regulates lipid metabolism and growth regulation and plays a structural role in the outer membrane. TAG (and maybe other lipids) enters the central cavity of the P55 transporter from within the cell inner membrane via clefts on the cytoplasmic face of P55 between TM5-TM8 and TM2-TM11. From there the lipid is probably transferred to the hydrophobic cavity of LprG. Involved in drug susceptibilty, its expression partially complements the antibiotic susceptibilty of a double lprG-mfs deletion. Probably does not function as a bona fide drug efflux pump, but instead plays a role in outer membrane biogenesis. Probably required with LprG for normal surface localization of lipoarabinomannan (LAM). This chain is Triacylglyceride transporter MAB_2807, found in Mycobacteroides abscessus (strain ATCC 19977 / DSM 44196 / CCUG 20993 / CIP 104536 / JCM 13569 / NCTC 13031 / TMC 1543 / L948) (Mycobacterium abscessus).